The following is a 250-amino-acid chain: Histone H1.3 (250 aa).

Disordered stretches follow at residues 17 to 53 and 104 to 250; these read AASGEKKVSTKKAAATPKSKKSTAAPPSHPPTQQMVD and QTKG…ATKK. The segment covering 27–42 has biased composition (low complexity); that stretch reads KKAAATPKSKKSTAAP. Residues 44–118 form the H15 domain; sequence SHPPTQQMVD…GASGSFKLSR (75 aa). Basic and acidic residues predominate over residues 120–133; sequence AKKDAKPKASAVEK. A compositionally biased stretch (low complexity) spans 138-161; the sequence is VNASAAAATKRSSSTSTTKKAAGA. The segment covering 174–191 has biased composition (basic and acidic residues); sequence KNVEKKKADKEKAKDAKK. Residues 192–234 show a composition bias toward low complexity; sequence TGTIKAKLTTAKAKSSATKPKTPKPKTTSAKPKKVVSATTPKK. Positions 235 to 250 are enriched in basic residues; it reads TAVKKPKAKTASATKK.

Belongs to the histone H1/H5 family.

Its subcellular location is the nucleus. It localises to the chromosome. Its function is as follows. Histones H1 are necessary for the condensation of nucleosome chains into higher-order structures. The chain is Histone H1.3 (His1.3) from Drosophila virilis (Fruit fly).